A 409-amino-acid polypeptide reads, in one-letter code: Elongation factor Tu (409 aa).

The tr-type G domain maps to 10–214 (KPHVNIGTIG…EVDAYIPEPE (205 aa)). The segment at 19–26 (GHVDHGKT) is G1. A GTP-binding site is contributed by 19-26 (GHVDHGKT). Residue Thr-26 coordinates Mg(2+). The tract at residues 60–64 (GITIN) is G2. Residues 81–84 (DCPG) are G3. Residues 81-85 (DCPGH) and 136-139 (NKQD) each bind GTP. The tract at residues 136-139 (NKQD) is G4. Positions 174-176 (SAL) are G5.

Belongs to the TRAFAC class translation factor GTPase superfamily. Classic translation factor GTPase family. EF-Tu/EF-1A subfamily. As to quaternary structure, monomer.

It localises to the cytoplasm. It catalyses the reaction GTP + H2O = GDP + phosphate + H(+). Functionally, GTP hydrolase that promotes the GTP-dependent binding of aminoacyl-tRNA to the A-site of ribosomes during protein biosynthesis. This Rippkaea orientalis (strain PCC 8801 / RF-1) (Cyanothece sp. (strain PCC 8801)) protein is Elongation factor Tu.